The following is a 541-amino-acid chain: Transcription termination factor MTERF4, chloroplastic (541 aa).

A chloroplast-targeting transit peptide spans 1-45; it reads MKIRFCNGFTKPGFLLVHFEPPSFFAVRSRSLSDSTYGNLCNHKK. Disordered stretches follow at residues 66-103 and 503-541; these read SRSLDSPRRERSSRSSSSSGRDRDRDKDKGRDSKSLYS and EVETDPSSFDMNTLMQPEREEESDSEYEEEEDDDDEEFA. Over residues 85-99 the composition is skewed to basic and acidic residues; it reads GRDRDRDKDKGRDSK. The segment covering 507 to 517 has biased composition (polar residues); it reads DPSSFDMNTLM. Residues 521-541 show a composition bias toward acidic residues; it reads REEESDSEYEEEEDDDDEEFA.

It belongs to the mTERF family.

Its subcellular location is the plastid. The protein resides in the chloroplast. The protein localises to the mitochondrion. Its function is as follows. Transcription termination factor required for processing and steady-state levels of plastid transcripts. Required for splicing of the chloroplastic Clp protease (ClpP) group IIa intron. Required for maturation of 16S rRNA and 23S rRNA in the chloroplast. Essential for embryogenesis. Required for the maintenance of the correct levels of transcripts in the mitochondria and chloroplasts. The protein is Transcription termination factor MTERF4, chloroplastic of Arabidopsis thaliana (Mouse-ear cress).